Here is a 255-residue protein sequence, read N- to C-terminus: Eukaryotic translation initiation factor 3 subunit J (255 aa).

2 stretches are compositionally biased toward acidic residues: residues 1–16 and 34–53; these read MAEN…EAED and EGED…EEAQ. Residues 1–107 form a disordered region; the sequence is MAENDSWDAD…SSNLPEITPE (107 aa). A compositionally biased stretch (basic and acidic residues) spans 54-95; the sequence is DATKQEPQKTELKVPEKKKLQEKIKEKENLQKKRKEELKKQA. The stretch at 69–131 forms a coiled coil; that stretch reads EKKKLQEKIK…DSDLELAKEA (63 aa).

The protein belongs to the eIF-3 subunit J family. Component of the eukaryotic translation initiation factor 3 (eIF-3) complex, which is composed of 13 subunits: eif3a, eif3b, eif3c, eif3d, eif3e, eif3f, eif3g, eif3h, eif3i, eif3j, eif3k, eif3l and eif3m.

Its subcellular location is the cytoplasm. Its function is as follows. Component of the eukaryotic translation initiation factor 3 (eIF-3) complex, which is involved in protein synthesis of a specialized repertoire of mRNAs and, together with other initiation factors, stimulates binding of mRNA and methionyl-tRNAi to the 40S ribosome. The eIF-3 complex specifically targets and initiates translation of a subset of mRNAs involved in cell proliferation. This chain is Eukaryotic translation initiation factor 3 subunit J (eif3j), found in Xenopus laevis (African clawed frog).